A 421-amino-acid polypeptide reads, in one-letter code: Serine hydroxymethyltransferase (421 aa).

(6S)-5,6,7,8-tetrahydrofolate contacts are provided by residues leucine 120 and 124–126 (GHL). Residue lysine 229 is modified to N6-(pyridoxal phosphate)lysine. 354–356 (SPF) contacts (6S)-5,6,7,8-tetrahydrofolate.

The protein belongs to the SHMT family. Homodimer. The cofactor is pyridoxal 5'-phosphate.

The protein resides in the cytoplasm. It carries out the reaction (6R)-5,10-methylene-5,6,7,8-tetrahydrofolate + glycine + H2O = (6S)-5,6,7,8-tetrahydrofolate + L-serine. It functions in the pathway one-carbon metabolism; tetrahydrofolate interconversion. It participates in amino-acid biosynthesis; glycine biosynthesis; glycine from L-serine: step 1/1. Functionally, catalyzes the reversible interconversion of serine and glycine with tetrahydrofolate (THF) serving as the one-carbon carrier. This reaction serves as the major source of one-carbon groups required for the biosynthesis of purines, thymidylate, methionine, and other important biomolecules. Also exhibits THF-independent aldolase activity toward beta-hydroxyamino acids, producing glycine and aldehydes, via a retro-aldol mechanism. The polypeptide is Serine hydroxymethyltransferase (Opitutus terrae (strain DSM 11246 / JCM 15787 / PB90-1)).